The primary structure comprises 249 residues: 5'-nucleotidase SurE (249 aa).

4 residues coordinate a divalent metal cation: D8, D9, S39, and N91.

The protein belongs to the SurE nucleotidase family. A divalent metal cation is required as a cofactor.

The protein resides in the cytoplasm. The enzyme catalyses a ribonucleoside 5'-phosphate + H2O = a ribonucleoside + phosphate. In terms of biological role, nucleotidase that shows phosphatase activity on nucleoside 5'-monophosphates. In Haemophilus influenzae (strain ATCC 51907 / DSM 11121 / KW20 / Rd), this protein is 5'-nucleotidase SurE.